Consider the following 138-residue polypeptide: Probable lactoylglutathione lyase (138 aa).

The 125-residue stretch at 5-129 (RILHTMLRVG…DGYMIELIQN (125 aa)) folds into the VOC domain. Histidine 8 serves as a coordination point for Ni(2+). Substrate is bound at residue arginine 12. A Ni(2+)-binding site is contributed by glutamate 59. 2 residues coordinate substrate: asparagine 63 and histidine 77. Histidine 77 and glutamate 125 together coordinate Ni(2+). Glutamate 125 acts as the Proton donor/acceptor in catalysis.

Belongs to the glyoxalase I family. Requires Ni(2+) as cofactor.

The enzyme catalyses (R)-S-lactoylglutathione = methylglyoxal + glutathione. It participates in secondary metabolite metabolism; methylglyoxal degradation; (R)-lactate from methylglyoxal: step 1/2. In terms of biological role, catalyzes the conversion of hemimercaptal, formed from methylglyoxal and glutathione, to S-lactoylglutathione. The protein is Probable lactoylglutathione lyase (gloA) of Vibrio cholerae serotype O1 (strain ATCC 39315 / El Tor Inaba N16961).